Here is a 119-residue protein sequence, read N- to C-terminus: MKRIAFVFSTAPHGTAAGREGLDALLATSALTDDLTVFFIADGVFQLLSGQKPDAVLARDYIATFKLLGLYDIEQCWVCAASLRERGLDPQTPFVVEATPLEADALRRELANYDVILRF.

The protein belongs to the DsrF/TusC family. As to quaternary structure, heterohexamer, formed by a dimer of trimers. The hexameric TusBCD complex contains 2 copies each of TusB, TusC and TusD. The TusBCD complex interacts with TusE.

It is found in the cytoplasm. Its function is as follows. Part of a sulfur-relay system required for 2-thiolation of 5-methylaminomethyl-2-thiouridine (mnm(5)s(2)U) at tRNA wobble positions. The polypeptide is Protein TusC (Escherichia coli O8 (strain IAI1)).